The sequence spans 283 residues: HTH-type transcriptional activator RhaR (283 aa).

The HTH araC/xylS-type domain maps to 179 to 277 (DLLMAALGNS…GVTPRVWRQQ (99 aa)). DNA-binding regions (H-T-H motif) lie at residues 196–217 (QHFC…RQQT) and 244–267 (ISEI…TRET).

In terms of assembly, binds DNA as a dimer.

It localises to the cytoplasm. Functionally, activates expression of the rhaSR operon in response to L-rhamnose. This is HTH-type transcriptional activator RhaR from Cronobacter sakazakii (strain ATCC BAA-894) (Enterobacter sakazakii).